The sequence spans 435 residues: C4-dicarboxylate transport protein (435 aa).

9 helical membrane-spanning segments follow: residues serine 4 to glycine 24, leucine 44 to methionine 64, valine 76 to valine 96, isoleucine 142 to phenylalanine 162, valine 184 to methionine 204, leucine 222 to alanine 242, valine 289 to leucine 309, isoleucine 326 to valine 346, and isoleucine 352 to isoleucine 372.

The protein belongs to the dicarboxylate/amino acid:cation symporter (DAACS) (TC 2.A.23) family.

The protein resides in the cell inner membrane. Its function is as follows. Responsible for the transport of dicarboxylates such as succinate, fumarate, and malate from the periplasm across the membrane. The chain is C4-dicarboxylate transport protein from Salmonella paratyphi A (strain ATCC 9150 / SARB42).